A 244-amino-acid polypeptide reads, in one-letter code: Probable transcriptional regulatory protein Dgeo_2194 (244 aa).

Residues 1–21 (MAGHSKWAQIKRKKGANDKKR) are disordered.

It belongs to the TACO1 family.

The protein resides in the cytoplasm. In Deinococcus geothermalis (strain DSM 11300 / CIP 105573 / AG-3a), this protein is Probable transcriptional regulatory protein Dgeo_2194.